Here is a 791-residue protein sequence, read N- to C-terminus: Centrosomal protein of 89 kDa (791 aa).

The interval Ala-27 to Ser-203 is disordered. Residues Pro-30–Pro-45 show a composition bias toward pro residues. Ser-50 carries the post-translational modification Phosphoserine. Residues Ser-50–Thr-62 are compositionally biased toward low complexity. Over residues Ser-75–Phe-89 the composition is skewed to basic and acidic residues. The span at Ala-94 to Asn-107 shows a compositional bias: polar residues. Residues Arg-137–Gln-161 show a composition bias toward basic and acidic residues. Residues Ser-181 to Ser-190 show a composition bias toward low complexity. Coiled-coil stretches lie at residues Ser-252–Ala-291, Leu-370–Glu-598, and His-670–Gln-737.

It is found in the cytoplasm. Its subcellular location is the cytosol. It localises to the cytoskeleton. The protein localises to the microtubule organizing center. The protein resides in the centrosome. It is found in the spindle pole. Its subcellular location is the centriole. It localises to the mitochondrion intermembrane space. In terms of biological role, required for ciliogenesis. Also plays a role in mitochondrial metabolism where it may modulate complex IV activity. This Mus musculus (Mouse) protein is Centrosomal protein of 89 kDa (Cep89).